Here is a 289-residue protein sequence, read N- to C-terminus: 18S rRNA (guanine-N(7))-methyltransferase RID2 (289 aa).

The disordered stretch occupies residues 215 to 289 (KNEYDESCSE…FTSRKRRTRF (75 aa)). Positions 219-237 (DESCSEDDNSDDEESEEVG) are enriched in acidic residues. Basic residues predominate over residues 243-254 (RPRKRQRTNTKV). Basic and acidic residues predominate over residues 255 to 264 (KGREWVLRKK). Positions 268-275 (RRKGKNVP) match the Nuclear localization signal motif.

Belongs to the class I-like SAM-binding methyltransferase superfamily. BUD23/WBSCR22 family. As to expression, expressed in seedlings, roots and flowers.

Its subcellular location is the nucleus. It is found in the nucleoplasm. The protein localises to the cytoplasm. It localises to the perinuclear region. The protein resides in the nucleolus. The enzyme catalyses guanosine(1575) in yeast 18S rRNA + S-adenosyl-L-methionine = N(7)-methylguanosine(1575) in yeast 18S rRNA + S-adenosyl-L-homocysteine. Functionally, essential protein. S-adenosyl-L-methionine-dependent methyltransferase that specifically methylates the N(7) position of a guanine in 18S rRNA. Requires the methyltransferase adapter protein TRM112 for full rRNA methyltransferase activity. Important for biogenesis end export of the 40S ribosomal subunit independent on its methyltransferase activity. Involved in the pre-rRNA processing steps in the nucleolus leading to small-subunit rRNA production independently of its RNA-modifying catalytic activity. Supports cell proliferation. Required for the initiation of lateral root primordia formation and for the root apical meristem (RAM) organization as well as for leaves development. During callus formation from hypocotyl and root explants, required for the initial stage of reactivation of cell proliferation in the hypocotyl stele. Involved in leaf polarity establishment by functioning cooperatively with AS2 to repress abaxial genes ARF3, ARF4, KAN1, KAN2, YAB1 and YAB5, and the knox homeobox genes KNAT1, KNAT2, KNAT6, and STM to promote adaxial development in leaf primordia at shoot apical meristems at high temperatures. The chain is 18S rRNA (guanine-N(7))-methyltransferase RID2 from Arabidopsis thaliana (Mouse-ear cress).